We begin with the raw amino-acid sequence, 261 residues long: Type II restriction enzyme Sau96I (261 aa).

Monomer.

It catalyses the reaction Endonucleolytic cleavage of DNA to give specific double-stranded fragments with terminal 5'-phosphates.. A P subtype restriction enzyme that recognizes the double-stranded sequence 5'-GGNCC-3' and cleaves after G-1. The chain is Type II restriction enzyme Sau96I from Staphylococcus aureus.